The sequence spans 334 residues: Glycerol-3-phosphate dehydrogenase [NAD(P)+] (334 aa).

NADPH-binding residues include serine 14, tyrosine 15, arginine 35, and lysine 109. Lysine 109, glycine 138, and threonine 140 together coordinate sn-glycerol 3-phosphate. Alanine 142 serves as a coordination point for NADPH. 5 residues coordinate sn-glycerol 3-phosphate: lysine 194, aspartate 247, serine 257, arginine 258, and asparagine 259. Lysine 194 (proton acceptor) is an active-site residue. NADPH is bound at residue arginine 258. Valine 282 and glutamate 284 together coordinate NADPH.

Belongs to the NAD-dependent glycerol-3-phosphate dehydrogenase family.

It localises to the cytoplasm. It carries out the reaction sn-glycerol 3-phosphate + NAD(+) = dihydroxyacetone phosphate + NADH + H(+). The enzyme catalyses sn-glycerol 3-phosphate + NADP(+) = dihydroxyacetone phosphate + NADPH + H(+). Its pathway is membrane lipid metabolism; glycerophospholipid metabolism. In terms of biological role, catalyzes the reduction of the glycolytic intermediate dihydroxyacetone phosphate (DHAP) to sn-glycerol 3-phosphate (G3P), the key precursor for phospholipid synthesis. In Colwellia psychrerythraea (strain 34H / ATCC BAA-681) (Vibrio psychroerythus), this protein is Glycerol-3-phosphate dehydrogenase [NAD(P)+].